The sequence spans 292 residues: (S)-phenoxypropionate/alpha-ketoglutarate-dioxygenase (292 aa).

Residues histidine 108 and aspartate 110 each contribute to the Fe cation site. 2-oxoglutarate-binding residues include threonine 135 and tryptophan 247. Histidine 262 serves as a coordination point for Fe cation. Arginine 273 provides a ligand contact to 2-oxoglutarate.

This sequence belongs to the TfdA dioxygenase family. In terms of assembly, monomer. Requires Fe cation as cofactor. L-ascorbate is required as a cofactor.

It carries out the reaction (S)-2-(4-chloro-2-methylphenoxy)propanoate + 2-oxoglutarate + O2 = 2-methyl-4-chlorophenol + pyruvate + succinate + CO2. The enzyme catalyses (S)-(2,4-dichlorophenoxy)propanoate + 2-oxoglutarate + O2 = 2,4-dichlorophenol + pyruvate + succinate + CO2. Its pathway is xenobiotic degradation; 2-(2,4-dichlorophenoxy)propanoate degradation. With respect to regulation, inhibited by divalent cations, most significantly by copper and nickel, and by diethylpyrocarbonate (DEPC). In terms of biological role, involved in the degradation of the phenoxypropionate herbicides. Catalyzes the enantiospecific cleavage of the ether bond in the herbicid S-dichlorprop ((S)-2-(2,4-dichlorophenoxy)propionate)(S-2,4-DP) and S-mecoprop ((S)-2-(4-chloro-2-methylphenoxy)propionate)(S-2,4-MCPP). It can also accept (RS)-2-(4-chlorophenoxy)propionate, (RS)-2-(m-chlorophenoxy)propionate and phenoxyacetate derivatives such as 2,4-dichlorophenoxyacetate (2,4-D), however it can only accept 2-oxoglutarate as oxygen acceptor. The sequence is that of (S)-phenoxypropionate/alpha-ketoglutarate-dioxygenase from Delftia acidovorans (Pseudomonas acidovorans).